Consider the following 275-residue polypeptide: Large ribosomal subunit protein uL2c (275 aa).

The segment at 219–255 (TVRGSVMNPCDHPHGGGEGRAPIGRTRPLTPWGKPAL) is disordered.

This sequence belongs to the universal ribosomal protein uL2 family. As to quaternary structure, part of the 50S ribosomal subunit.

The protein localises to the plastid. Its subcellular location is the chloroplast. The protein is Large ribosomal subunit protein uL2c (rpl2) of Trieres chinensis (Marine centric diatom).